The chain runs to 170 residues: Group 2 truncated hemoglobin 3-1 (170 aa).

H98 provides a ligand contact to heme b.

It belongs to the truncated hemoglobin family. Group II subfamily. As to quaternary structure, homodimer when ferric.

In terms of biological role, hemoglobin-like protein that exhibits an unusual concentration-independent binding of O(2) and CO. Required for general plant development and during nodulation. May promote shoot organogenesis from root explants. The sequence is that of Group 2 truncated hemoglobin 3-1 from Medicago truncatula (Barrel medic).